A 98-amino-acid polypeptide reads, in one-letter code: NADH-ubiquinone oxidoreductase chain 4L (98 aa).

3 helical membrane passes run 2-22, 29-49, and 61-81; these read PSIS…MLMF, SLLC…LTIL, and ILLL…LVMV.

Belongs to the complex I subunit 4L family. As to quaternary structure, core subunit of respiratory chain NADH dehydrogenase (Complex I) which is composed of 45 different subunits.

It localises to the mitochondrion inner membrane. The enzyme catalyses a ubiquinone + NADH + 5 H(+)(in) = a ubiquinol + NAD(+) + 4 H(+)(out). Its function is as follows. Core subunit of the mitochondrial membrane respiratory chain NADH dehydrogenase (Complex I) which catalyzes electron transfer from NADH through the respiratory chain, using ubiquinone as an electron acceptor. Part of the enzyme membrane arm which is embedded in the lipid bilayer and involved in proton translocation. The polypeptide is NADH-ubiquinone oxidoreductase chain 4L (MT-ND4L) (Microcebus simmonsi (Simmons's mouse lemur)).